The sequence spans 737 residues: MATANSIIVLDDDDEDEAAAQPGPSHPPPNPASPQAEAPGSSQPHGAGGSSSSGGKKCYKLENEKLFEEFLELCKMQTADHPEVVPFLYNRQQRAHSLFLASAEFCNILSRVLSRAQSRPAKLYVYINELCTVLKAHSAKKKLNLAPAATSSEPSGNNPPTDPSSDPTNAETTASEAPRTRGSRRQIQRLEQLLALYVAEIRRLQEKELDLSELDDPDSTYLQEARLKRKLIRLFGRLCELKDCSSLTGRVIEQRIPYRGTRYPEVNRRIERLINKPGPDTFPDYGDVLRAVEKAAARHSLGLPRQQLQLMAQDAFRDVGIRLQERRHLDLIYNFGCHLTDDYRPGIDPALSDPALARRLRENRSLAMSRLDEVISKYAMMQDKSEEGERQKRRARLPQATSSHSTDPLKASLDSGEGPSGMASQECPTTSKPETDDEEDEESEEEEEEEEEEEEEEATDSEEEEDLEQMQEGQGDDEEEEEEEEEAGQDGDKSPMSPPRISTEKNLEPSKGISRSMGEQQNKEFTVSPSSEEPLAPSSIDAESNGENLEELLLEEESPISQLFELEIEALPLDTTPSPEERDISSSRKQSEEPLTTVLENGAAMVTSTSFNGGVSPHTWGDSCPPCKKSRKEKETGAEPLGNSYVERQRSVHEKNGRKIPTLPSPPSPLTSMAPVADSSTRVDSPSHGLVTSSLCSASQARLSQTPHSQPSRPGTYKMSVATQCDPEEIIVLSDSD.

The tract at residues 1 to 55 (MATANSIIVLDDDDEDEAAAQPGPSHPPPNPASPQAEAPGSSQPHGAGGSSSSGG) is disordered. Positions 1 to 159 (MATANSIIVL…TSSEPSGNNP (159 aa)) are necessary for interaction with USP7 and ATRX. At serine 25 the chain carries Phosphoserine. Residues 33–45 (SPQAEAPGSSQPH) show a composition bias toward low complexity. Lysine 142 participates in a covalent cross-link: Glycyl lysine isopeptide (Lys-Gly) (interchain with G-Cter in SUMO2). The disordered stretch occupies residues 145–184 (LAPAATSSEPSGNNPPTDPSSDPTNAETTASEAPRTRGSR). Polar residues predominate over residues 149–175 (ATSSEPSGNNPPTDPSSDPTNAETTAS). Residues 179–216 (RTRGSRRQIQRLEQLLALYVAEIRRLQEKELDLSELDD) adopt a coiled-coil conformation. The segment at 182–417 (GSRRQIQRLE…PLKASLDSGE (236 aa)) is interaction with histone H3.3. Phosphoserine is present on serine 212. A necessary for interaction with USP7 region spans residues 346–567 (GIDPALSDPA…SPISQLFELE (222 aa)). The segment at 382 to 556 (QDKSEEGERQ…ENLEELLLEE (175 aa)) is disordered. The Nuclear localization signal motif lies at 390 to 394 (RQKRR). Serine 412 and serine 424 each carry phosphoserine. The segment covering 422-432 (MASQECPTTSK) has biased composition (polar residues). A coiled-coil region spans residues 432-474 (KPETDDEEDEESEEEEEEEEEEEEEEATDSEEEEDLEQMQEGQ). Residues 435–489 (TDDEEDEESEEEEEEEEEEEEEEATDSEEEEDLEQMQEGQGDDEEEEEEEEEAGQ) show a composition bias toward acidic residues. Phosphothreonine is present on threonine 459. A phosphoserine mark is found at serine 494 and serine 497. Lysine 511 is subject to N6-acetyllysine. Polar residues predominate over residues 517–527 (MGEQQNKEFTV). Residues 528–547 (SPSSEEPLAPSSIDAESNGE) are compositionally biased toward low complexity. Phosphoserine is present on residues serine 558 and serine 578. The segment at 569–719 (EALPLDTTPS…QPSRPGTYKM (151 aa)) is disordered. Positions 579 to 592 (PEERDISSSRKQSE) are enriched in basic and acidic residues. An interaction with SPOP region spans residues 624–737 (CPPCKKSRKE…EEIIVLSDSD (114 aa)). The Nuclear localization signal motif lies at 626-632 (PCKKSRK). Residues lysine 628 and lysine 629 each participate in a glycyl lysine isopeptide (Lys-Gly) (interchain with G-Cter in SUMO1) cross-link. A compositionally biased stretch (basic and acidic residues) spans 647 to 657 (ERQRSVHEKNG). A phosphoserine mark is found at serine 665, serine 668, serine 685, serine 699, serine 734, and serine 736. Residues 678–713 (DSSTRVDSPSHGLVTSSLCSASQARLSQTPHSQPSR) are compositionally biased toward polar residues. A sumo interaction motif (SIM) region spans residues 730-737 (IIVLSDSD).

The protein belongs to the DAXX family. Homomultimer. Interacts (via C-terminus) with TNFRSF6 (via death domain). Interacts with PAX5, SLC2A4/GLUT4, MAP3K5, TGFBR2, phosphorylated dimeric HSPB1/HSP27, CENPC, ETS1, sumoylated PML, UBE2I, MCRS1 and TP53. Interacts (via N-terminus) with HIPK2 and HIPK3. Interacts with HIPK1, which induces translocation from PML/POD/ND10 nuclear bodies to chromatin and enhances association with HDAC1. Interacts (non-phosphorylated) with PAX3, PAX7, DEK, HDAC1, HDAC2, HDAC3, acetylated histone H4 and histones H2A, H2B, H3, H3.3 and H4. Interacts with SPOP; mediating CUL3-dependent proteasomal degradation. Interacts with CBP; the interaction is dependent the sumoylation of CBP and suppresses CBP transcriptional activity via recruitment of HDAC2 directly in the complex with TP53 and HIPK2. Interacts with AXIN1; the interaction stimulates the interaction of DAXX with TP53, stimulates 'Ser-46' phosphorylation of TP53 on and induces cell death on UV irradiation. Interacts with MDM2; the interaction is direct. Interacts with USP7; the interaction is direct and independent of MDM2 and TP53. Part of a complex with DAXX, MDM2 and USP7 under non-stress conditions. Interacts (via N-terminus) with RASSF1 (via C-terminus); the interaction is independent of MDM2 and TP53; RASSF1 isoform A disrupts interactions among MDM2, DAXX and USP7, thus contributing to the efficient activation of TP53 by promoting MDM2 self-ubiquitination in cell-cycle checkpoint control in response to DNA damage. Interacts with ATRX to form the chromatin remodeling complex ATRX:DAXX. Interacts with HSF1 (via homotrimeric form preferentially); this interaction relieves homotrimeric HSF1 from repression of its transcriptional activity by HSP90-dependent multichaperone complex upon heat shock. In terms of processing, sumoylated with SUMO1 on multiple lysine residues. Polyubiquitinated; which is promoted by CUL3 and SPOP and results in proteasomal degradation. Ubiquitinated by MDM2; inducing its degradation. Deubiquitinated by USP7; leading to stabilize it.

It localises to the cytoplasm. It is found in the nucleus. The protein localises to the nucleoplasm. The protein resides in the PML body. Its subcellular location is the nucleolus. It localises to the chromosome. It is found in the centromere. Functionally, transcription corepressor known to repress transcriptional potential of several sumoylated transcription factors. Down-regulates basal and activated transcription. Its transcription repressor activity is modulated by recruiting it to subnuclear compartments like the nucleolus or PML/POD/ND10 nuclear bodies through interactions with MCSR1 and PML, respectively. Seems to regulate transcription in PML/POD/ND10 nuclear bodies together with PML and may influence TNFRSF6-dependent apoptosis thereby. Inhibits transcriptional activation of PAX3 and ETS1 through direct protein-protein interactions. Modulates PAX5 activity; the function seems to involve CREBBP. Acts as an adapter protein in a MDM2-DAXX-USP7 complex by regulating the RING-finger E3 ligase MDM2 ubiquitination activity. Under non-stress condition, in association with the deubiquitinating USP7, prevents MDM2 self-ubiquitination and enhances the intrinsic E3 ligase activity of MDM2 towards TP53, thereby promoting TP53 ubiquitination and subsequent proteasomal degradation. Upon DNA damage, its association with MDM2 and USP7 is disrupted, resulting in increased MDM2 autoubiquitination and consequently, MDM2 degradation, which leads to TP53 stabilization. Acts as a histone chaperone that facilitates deposition of histone H3.3. Acts as a targeting component of the chromatin remodeling complex ATRX:DAXX which has ATP-dependent DNA translocase activity and catalyzes the replication-independent deposition of histone H3.3 in pericentric DNA repeats outside S-phase and telomeres, and the in vitro remodeling of H3.3-containing nucleosomes. Does not affect the ATPase activity of ATRX but alleviates its transcription repression activity. Upon neuronal activation associates with regulatory elements of selected immediate early genes where it promotes deposition of histone H3.3 which may be linked to transcriptional induction of these genes. Required for the recruitment of histone H3.3:H4 dimers to PML-nuclear bodies (PML-NBs); the process is independent of ATRX and facilitated by ASF1A; PML-NBs are suggested to function as regulatory sites for the incorporation of newly synthesized histone H3.3 into chromatin. Proposed to mediate activation of the JNK pathway and apoptosis via MAP3K5 in response to signaling from TNFRSF6 and TGFBR2. Interaction with HSPB1/HSP27 may prevent interaction with TNFRSF6 and MAP3K5 and block DAXX-mediated apoptosis. In contrast, in lymphoid cells JNC activation and TNFRSF6-mediated apoptosis may not involve DAXX. Plays a role as a positive regulator of the heat shock transcription factor HSF1 activity during the stress protein response. In Canis lupus familiaris (Dog), this protein is Death domain-associated protein 6 (DAXX).